The primary structure comprises 416 residues: Protein-lysine N-trimethyltransferase SMYD5 (416 aa).

Positions 21–351 constitute an SET domain; that stretch reads GSVEVRYVDS…PGEEICISYL (331 aa). Residues 98–136 form an MYND-type zinc finger; it reads PELCSVRKDLHQNCPHCQVMYCSAECRLAAAEQYHQILC. Tyr-350 lines the S-adenosyl-L-methionine pocket. Residues 383 to 416 form a disordered region; sequence EADDPNVTSEEEEEEDEEEGEPEDAELGDEMTDV.

Belongs to the class V-like SAM-binding methyltransferase superfamily. As to quaternary structure, interacts with the N-CoR complex. Interacts with EHMT2 and CBX5. Ubiquitinated and degradaed by the proteasome in response to mild hypothermia (32 degrees Celsius), relieving repression of the SP1 gene.

The protein resides in the cytoplasm. The catalysed reaction is L-lysyl-[protein] + 3 S-adenosyl-L-methionine = N(6),N(6),N(6)-trimethyl-L-lysyl-[protein] + 3 S-adenosyl-L-homocysteine + 3 H(+). It carries out the reaction L-lysyl(20)-[histone H4] + 3 S-adenosyl-L-methionine = N(6),N(6),N(6)-trimethyl-L-lysyl(20)-[histone H4] + 3 S-adenosyl-L-homocysteine + 3 H(+). It catalyses the reaction L-lysyl(36)-[histone H3] + 3 S-adenosyl-L-methionine = N(6),N(6),N(6)-trimethyl-L-lysyl(36)-[histone H3] + 3 S-adenosyl-L-homocysteine + 3 H(+). In terms of biological role, protein-lysine N-trimethyltransferase that specifically catalyzes trimethylation of 'Lys-22' of the RPL40/eL40 subunit of the 60S ribosome, thereby promoting translation elongation and protein synthesis. May also act as a histone methyltransferase in the context of histone octamers, but not on nucleosome substrates: trimethylates 'Lys-36' of histone H3 and 'Lys-20' of histone H4 to form H3K36me3 and H4K20me3, respectively. The histone methyltransferase activity, which is independent of its SET domain, is however unsure in vivo. In association with the NCoR corepressor complex, involved in the repression of toll-like receptor 4 (TLR4)-target inflammatory genes in macrophages, possibly by catalyzing the formation of H4K20me3 at the gene promoters. Plays an important role in embryonic stem (ES) cell self-renewal and differentiation. Maintains genome stability of ES cells during differentiation through regulation of heterochromatin formation and repression of endogenous repetitive DNA elements by promoting H4K20me3 marks. Acts as a regulator of the hypothermia response: its degradation in response to mild hypothermia relieves the formation of H3K36me3 at gene promoters, allowing expression of the neuroprotective gene SP1. The chain is Protein-lysine N-trimethyltransferase SMYD5 from Mus musculus (Mouse).